Reading from the N-terminus, the 372-residue chain is UDP-N-acetylenolpyruvoylglucosamine reductase (372 aa).

The FAD-binding PCMH-type domain maps to 29-205 (VGPTARRLIT…LEVEFALDAS (177 aa)). Residue R177 is part of the active site. The active-site Proton donor is S260. E364 is an active-site residue.

The protein belongs to the MurB family. It depends on FAD as a cofactor.

It localises to the cytoplasm. The catalysed reaction is UDP-N-acetyl-alpha-D-muramate + NADP(+) = UDP-N-acetyl-3-O-(1-carboxyvinyl)-alpha-D-glucosamine + NADPH + H(+). It functions in the pathway cell wall biogenesis; peptidoglycan biosynthesis. Its function is as follows. Cell wall formation. The chain is UDP-N-acetylenolpyruvoylglucosamine reductase from Mycobacterium avium (strain 104).